The chain runs to 302 residues: CRISPR-associated endonuclease Cas1 1 (302 aa).

Residues glutamate 159, histidine 219, and glutamate 234 each coordinate Mn(2+).

The protein belongs to the CRISPR-associated endonuclease Cas1 family. As to quaternary structure, homodimer, forms a heterotetramer with a Cas2 homodimer. Mg(2+) is required as a cofactor. Mn(2+) serves as cofactor.

Functionally, CRISPR (clustered regularly interspaced short palindromic repeat), is an adaptive immune system that provides protection against mobile genetic elements (viruses, transposable elements and conjugative plasmids). CRISPR clusters contain spacers, sequences complementary to antecedent mobile elements, and target invading nucleic acids. CRISPR clusters are transcribed and processed into CRISPR RNA (crRNA). Acts as a dsDNA endonuclease. Involved in the integration of spacer DNA into the CRISPR cassette. This is CRISPR-associated endonuclease Cas1 1 from Pyrobaculum aerophilum (strain ATCC 51768 / DSM 7523 / JCM 9630 / CIP 104966 / NBRC 100827 / IM2).